We begin with the raw amino-acid sequence, 37 residues long: uncharacterized protein (37 aa).

This is an uncharacterized protein from Archaeoglobus fulgidus (strain ATCC 49558 / DSM 4304 / JCM 9628 / NBRC 100126 / VC-16).